A 163-amino-acid chain; its full sequence is Succinate dehydrogenase assembly factor 2-A, mitochondrial (163 aa).

Residues 1-23 (MLRQLRLTMDISGWIFLPWRRSM) constitute a mitochondrion transit peptide.

Belongs to the SDHAF2 family. In terms of assembly, interacts with the flavoprotein subunit within the SDH catalytic dimer.

The protein resides in the mitochondrion matrix. Plays an essential role in the assembly of succinate dehydrogenase (SDH), an enzyme complex (also referred to as respiratory complex II) that is a component of both the tricarboxylic acid (TCA) cycle and the mitochondrial electron transport chain, and which couples the oxidation of succinate to fumarate with the reduction of ubiquinone (coenzyme Q) to ubiquinol. Required for flavinylation (covalent attachment of FAD) of the flavoprotein subunit of the SDH catalytic dimer. The chain is Succinate dehydrogenase assembly factor 2-A, mitochondrial from Drosophila sechellia (Fruit fly).